A 183-amino-acid polypeptide reads, in one-letter code: MADAAPAGDAPPNAGAPAGEGGDGEIVGGPHNPQQIAAQKRLQQTQAQVDEVVDIMRTNVEKVLERDSKLSELDDRADALQQGASQFEQQAGKLKRKFWLQNLKMMIIMGVIGLVVVGIIANKLGLIGGEQPPQYQYPPQYMQPPPPPPQQPAGGQSSLVDAAGAGDGAGAGGSAGAGDHGGV.

A compositionally biased stretch (low complexity) spans 1–17 (MADAAPAGDAPPNAGAP). The disordered stretch occupies residues 1 to 32 (MADAAPAGDAPPNAGAPAGEGGDGEIVGGPHN). Topologically, residues 1–106 (MADAAPAGDA…KFWLQNLKMM (106 aa)) are cytoplasmic. Over residues 18-27 (AGEGGDGEIV) the composition is skewed to gly residues. Positions 41–101 (RLQQTQAQVD…GKLKRKFWLQ (61 aa)) constitute a v-SNARE coiled-coil homology domain. The chain crosses the membrane as a helical span at residues 107 to 127 (IIMGVIGLVVVGIIANKLGLI). Topologically, residues 128–183 (GGEQPPQYQYPPQYMQPPPPPPQQPAGGQSSLVDAAGAGDGAGAGGSAGAGDHGGV) are vesicular. Residues 135 to 183 (YQYPPQYMQPPPPPPQQPAGGQSSLVDAAGAGDGAGAGGSAGAGDHGGV) form a disordered region. Residues 141 to 151 (YMQPPPPPPQQ) show a composition bias toward pro residues. Residues 165–183 (AGDGAGAGGSAGAGDHGGV) show a composition bias toward gly residues.

This sequence belongs to the synaptobrevin family. In terms of assembly, part of the SNARE core complex containing Snap25 and syntaxin. As to expression, specifically expressed in neurons and synapses.

It localises to the cytoplasmic vesicle. Its subcellular location is the secretory vesicle. The protein localises to the synaptic vesicle membrane. The protein resides in the early endosome membrane. Functionally, involved in the targeting and/or fusion of transport vesicles to their target membrane. Major SNARE protein of synaptic vesicles which mediates fusion of synaptic vesicles to release neurotransmitters. Essential for fast vesicular exocytosis and activity-dependent neurotransmitter release as well as fast endocytosis that mediates rapid reuse of synaptic vesicles. Also involved in a neuron-specific sort-and-degrade mechanism that promotes endolysosomal degradation and is required for neuronal maintenance. The chain is Neuronal synaptobrevin from Drosophila melanogaster (Fruit fly).